The following is a 492-amino-acid chain: Ketol-acid reductoisomerase (NADP(+)) (492 aa).

The KARI N-terminal Rossmann domain maps to 15–208; the sequence is AQLGKCRFMA…GGDRAGVLES (194 aa). Residues 45 to 48, R68, R76, S78, and 108 to 110 contribute to the NADP(+) site; these read CGAQ and DKQ. H132 is an active-site residue. An NADP(+)-binding site is contributed by G158. KARI C-terminal knotted domains lie at 209-344 and 345-485; these read SFVA…KAPP and FEGK…MTDM. 4 residues coordinate Mg(2+): D217, E221, E389, and E393. Position 414 (S414) interacts with substrate.

Belongs to the ketol-acid reductoisomerase family. Mg(2+) is required as a cofactor.

The catalysed reaction is (2R)-2,3-dihydroxy-3-methylbutanoate + NADP(+) = (2S)-2-acetolactate + NADPH + H(+). It catalyses the reaction (2R,3R)-2,3-dihydroxy-3-methylpentanoate + NADP(+) = (S)-2-ethyl-2-hydroxy-3-oxobutanoate + NADPH + H(+). It participates in amino-acid biosynthesis; L-isoleucine biosynthesis; L-isoleucine from 2-oxobutanoate: step 2/4. Its pathway is amino-acid biosynthesis; L-valine biosynthesis; L-valine from pyruvate: step 2/4. Its function is as follows. Involved in the biosynthesis of branched-chain amino acids (BCAA). Catalyzes an alkyl-migration followed by a ketol-acid reduction of (S)-2-acetolactate (S2AL) to yield (R)-2,3-dihydroxy-isovalerate. In the isomerase reaction, S2AL is rearranged via a Mg-dependent methyl migration to produce 3-hydroxy-3-methyl-2-ketobutyrate (HMKB). In the reductase reaction, this 2-ketoacid undergoes a metal-dependent reduction by NADPH to yield (R)-2,3-dihydroxy-isovalerate. This is Ketol-acid reductoisomerase (NADP(+)) from Edwardsiella ictaluri (strain 93-146).